The sequence spans 156 residues: Small ribosomal subunit protein uS7 (156 aa).

Belongs to the universal ribosomal protein uS7 family. In terms of assembly, part of the 30S ribosomal subunit. Contacts proteins S9 and S11.

One of the primary rRNA binding proteins, it binds directly to 16S rRNA where it nucleates assembly of the head domain of the 30S subunit. Is located at the subunit interface close to the decoding center, probably blocks exit of the E-site tRNA. In Aliivibrio salmonicida (strain LFI1238) (Vibrio salmonicida (strain LFI1238)), this protein is Small ribosomal subunit protein uS7.